Reading from the N-terminus, the 256-residue chain is Chorismate mutase (256 aa).

Residues Phe-3–Glu-255 form the Chorismate mutase domain. Positions 75 and 76 each coordinate L-tyrosine. Positions 138, 139, 141, and 142 each coordinate L-tryptophan. The L-tyrosine site is built by Asn-139, Gly-141, Ser-142, and Thr-145.

As to quaternary structure, homodimer.

It is found in the cytoplasm. The enzyme catalyses chorismate = prephenate. The protein operates within metabolic intermediate biosynthesis; prephenate biosynthesis; prephenate from chorismate: step 1/1. Each dimer has two allosteric binding sites that can bind the regulatory effectors tryptophan or tyrosine. Can bind either one tryptophan or one tyrosine, two tryptophan or two tyrosine or one tryptophan and one tyrosine, which differentially affect the catalytic activity. Activated by tryptophan and subject to feedback inhibition by tyrosine. In the presence of both tryptophan and tyrosine, the enzyme is in the activated state. Catalyzes the Claisen rearrangement of chorismate to prephenate. Acts at the first branch point in the aromatic amino acid pathway where it steers biosynthesis towards phenylalanine and tyrosine, and away from tryptophan. The sequence is that of Chorismate mutase from Saccharomyces cerevisiae (strain ATCC 204508 / S288c) (Baker's yeast).